Here is a 160-residue protein sequence, read N- to C-terminus: Serine-protein kinase RsbW (160 aa).

The protein belongs to the anti-sigma-factor family.

It carries out the reaction L-seryl-[protein] + ATP = O-phospho-L-seryl-[protein] + ADP + H(+). It catalyses the reaction L-threonyl-[protein] + ATP = O-phospho-L-threonyl-[protein] + ADP + H(+). In terms of biological role, negative regulator of sigma-B activity. Phosphorylates and inactivates its specific antagonist protein, RsbV. Upon phosphorylation of RsbV, RsbW is released and binds to sigma-B, thereby blocking its ability to form an RNA polymerase holoenzyme (E-sigma-B). The chain is Serine-protein kinase RsbW from Bacillus cereus (strain Q1).